Here is a 578-residue protein sequence, read N- to C-terminus: A-type ATP synthase subunit A (578 aa).

Residue 228-235 (GPFGSGKT) coordinates ATP.

The protein belongs to the ATPase alpha/beta chains family. Has multiple subunits with at least A(3), B(3), C, D, E, F, H, I and proteolipid K(x).

The protein resides in the cell membrane. It catalyses the reaction ATP + H2O + 4 H(+)(in) = ADP + phosphate + 5 H(+)(out). Its function is as follows. Component of the A-type ATP synthase that produces ATP from ADP in the presence of a proton gradient across the membrane. The A chain is the catalytic subunit. This chain is A-type ATP synthase subunit A, found in Methanosarcina barkeri (strain Fusaro / DSM 804).